The sequence spans 1164 residues: MAGGEDRGDGEPVSVVTVRVQYLEDTDPFACANFPEPRRAPTCSLDGALPLGAQIPAVHRLLGAPLKLEDCALQVSPSGYYLDTELSLEEQREMLEGFYEEISKGRKPTLILRTQLSVRVNAILEKLYSSSGPELRRSLFSLKQIFQEDKDLVPEFVHSEGLSCLIRVGAAADHNYQSYILRALGQLMLFVDGMLGVVAHSDTIQWLYTLCASLSRLVVKTALKLLLVFVEYSENNAPLFIRAVNSVASTTGAPPWANLVSILEEKNGADPELLVYTVTLINKTLAALPDQDSFYDVTDALEQQGMEALVQRHLGTAGTDVDLRTQLVLYENALKLEDGDIEEAPGAGGRRERRKPSSEEGKRSRRSLEGGGCPARAPEPGPTGPASPVGPTSSTGPALLTGPASSPVGPPSGLQASVNLFPTISVAPSADTSSERSIYKARFLENVAAAETEKQVALAQGRAETLAGAMPNEAGGHPDARQLWDSPETAPAARTPQSPAPCVLLRAQRSLAPEPKEPLIPASPKAEPIWELPTRAPRLSIGDLDFSDLGEDEDQDMLNVESVEAGKDIPAPSPPLPLLSGVPPPPPLPPPPPIKGPFPPPPPLPLAAPLPHSVPDSSALPTKRKTVKLFWRELKLAGGHGVSASRFGPCATLWASLDPVSVDTARLEHLFESRAKEVLPSKKAGEGRRTMTTVLDPKRSNAINIGLTTLPPVHVIKAALLNFDEFAVSKDGIEKLLTMMPTEEERQKIEEAQLANPDIPLGPAENFLMTLASIGGLAARLQLWAFKLDYDSMEREIAEPLFDLKVGMEQLVQNATFRCILATLLAVGNFLNGSQSSGFELSYLEKVSEVKDTVRRQSLLHHLCSLVLQTRPESSDLYSEIPALTRCAKVDFEQLTENLGQLERRSRAAEESLRSLAKHELAPALRARLTHFLDQCARRVAMLRIVHRRVCNRFHAFLLYLGYTPQAAREVRIMQFCHTLREFALEYRTCRERVLQQQQKQATYRERNKTRGRMITETEKFSGVAGEAPSNPSVPVAVSSGPGRGDADSHASMKSLLTSRPEDTTHNRRSRGMVQSSSPIMPTVGPSTASPEEPPGSSLPSDTSDEIMDLLVQSVTKSSPRALAARERKRSRGNRKSLRRTLKSGLGDDLVQALGLSKGPGLEV.

The region spanning 53–458 is the GBD/FH3 domain; the sequence is AQIPAVHRLL…AAETEKQVAL (406 aa). Disordered stretches follow at residues 340–411 and 470–500; these read DIEE…VGPP and MPNE…QSPA. Residues 355-368 are compositionally biased toward basic and acidic residues; sequence KPSSEEGKRSRRSL. Residue Ser-367 is modified to Phosphoserine. The segment covering 402-411 has biased composition (low complexity); sequence GPASSPVGPP. The residue at position 486 (Ser-486) is a Phosphoserine. Residues 487-615 enclose the FH1 domain; that stretch reads PETAPAARTP…LAAPLPHSVP (129 aa). The residue at position 495 (Thr-495) is a Phosphothreonine. Residues Ser-498, Ser-523, and Ser-573 each carry the phosphoserine modification. The disordered stretch occupies residues 566–619; sequence GKDIPAPSPPLPLLSGVPPPPPLPPPPPIKGPFPPPPPLPLAAPLPHSVPDSSA. Pro residues predominate over residues 571-608; that stretch reads APSPPLPLLSGVPPPPPLPPPPPIKGPFPPPPPLPLAA. An interaction with ROCK1 region spans residues 612–807; the sequence is HSVPDSSALP…AEPLFDLKVG (196 aa). The FH2 domain occupies 616–1013; it reads DSSALPTKRK…YRERNKTRGR (398 aa). Residue Thr-690 is modified to Phosphothreonine. The stretch at 884–921 forms a coiled coil; the sequence is LTRCAKVDFEQLTENLGQLERRSRAAEESLRSLAKHEL. A disordered region spans residues 1020 to 1143; sequence KFSGVAGEAP…NRKSLRRTLK (124 aa). Residues 1028-1041 show a composition bias toward low complexity; that stretch reads APSNPSVPVAVSSG. The DAD domain occupies 1053 to 1133; sequence MKSLLTSRPE…AARERKRSRG (81 aa). The span at 1073 to 1089 shows a compositional bias: polar residues; that stretch reads MVQSSSPIMPTVGPSTA. Residues 1127-1142 are compositionally biased toward basic residues; sequence ERKRSRGNRKSLRRTL.

This sequence belongs to the formin homology family. As to quaternary structure, self-associates via the FH2 domain. Binds to F-actin via its N-terminus. Binds to the cytoplasmic domain of CD21 via its C-terminus. Interacts with ROCK1 in a Src-dependent manner. Post-translationally, phosphorylated by ROCK1. Ubiquitous. Highly expressed in spleen.

Its subcellular location is the cytoplasm. It is found in the cytoskeleton. It localises to the cell projection. The protein localises to the bleb. Required for the assembly of F-actin structures, such as stress fibers. Depends on the Rho-ROCK cascade for its activity. Contributes to the coordination of microtubules with actin fibers and plays a role in cell elongation. Acts synergistically with ROCK1 to promote SRC-dependent non-apoptotic plasma membrane blebbing. The chain is FH1/FH2 domain-containing protein 1 (FHOD1) from Homo sapiens (Human).